Consider the following 275-residue polypeptide: tRNA (guanine-N(1)-)-methyltransferase (275 aa).

Residues glycine 124 and 149–154 (IGDYVL) each bind S-adenosyl-L-methionine.

It belongs to the RNA methyltransferase TrmD family. In terms of assembly, homodimer.

Its subcellular location is the cytoplasm. It catalyses the reaction guanosine(37) in tRNA + S-adenosyl-L-methionine = N(1)-methylguanosine(37) in tRNA + S-adenosyl-L-homocysteine + H(+). Specifically methylates guanosine-37 in various tRNAs. This Bifidobacterium animalis subsp. lactis (strain AD011) protein is tRNA (guanine-N(1)-)-methyltransferase.